A 101-amino-acid chain; its full sequence is NAD(P)H-quinone oxidoreductase subunit 4L, chloroplastic (101 aa).

The next 3 helical transmembrane spans lie at 2-22, 32-52, and 61-81; these read MLEHVLVLSAYLFSIGIYGLI, MCLELILNAVNINFVTFSDFF, and IFSIFVIAIAAAEAAIGPAIV.

Belongs to the complex I subunit 4L family. In terms of assembly, NDH is composed of at least 16 different subunits, 5 of which are encoded in the nucleus.

The protein resides in the plastid. Its subcellular location is the chloroplast thylakoid membrane. It carries out the reaction a plastoquinone + NADH + (n+1) H(+)(in) = a plastoquinol + NAD(+) + n H(+)(out). It catalyses the reaction a plastoquinone + NADPH + (n+1) H(+)(in) = a plastoquinol + NADP(+) + n H(+)(out). Its function is as follows. NDH shuttles electrons from NAD(P)H:plastoquinone, via FMN and iron-sulfur (Fe-S) centers, to quinones in the photosynthetic chain and possibly in a chloroplast respiratory chain. The immediate electron acceptor for the enzyme in this species is believed to be plastoquinone. Couples the redox reaction to proton translocation, and thus conserves the redox energy in a proton gradient. The protein is NAD(P)H-quinone oxidoreductase subunit 4L, chloroplastic of Vitis vinifera (Grape).